A 62-amino-acid chain; its full sequence is Potassium channel toxin kappa-KTx 3.2 (62 aa).

The signal sequence occupies residues 1-26; that stretch reads MKSTLMTASLLILVLLSIVDYASVYA. Positions 27 to 36 are excised as a propeptide; it reads ELIDSEISME. 2 disulfide bridges follow: cysteine 43-cysteine 61 and cysteine 47-cysteine 57.

Belongs to the short scorpion toxin superfamily. Potassium channel inhibitor kappa-KTx family. Kappa-KTx 3 subfamily. In terms of tissue distribution, expressed by the venom gland.

Its subcellular location is the secreted. In terms of biological role, potassium channel inhibitor (Kv). This chain is Potassium channel toxin kappa-KTx 3.2, found in Heterometrus petersii (Asian forest scorpion).